Here is a 389-residue protein sequence, read N- to C-terminus: Phosphoglycerate kinase (389 aa).

Residues 19–21 (DYN), Arg-34, 57–60 (HLGR), Arg-117, and Arg-150 each bind substrate. ATP is bound by residues Lys-200, Gly-288, Glu-319, and 347–350 (GGDS).

This sequence belongs to the phosphoglycerate kinase family. As to quaternary structure, monomer.

The protein localises to the cytoplasm. The enzyme catalyses (2R)-3-phosphoglycerate + ATP = (2R)-3-phospho-glyceroyl phosphate + ADP. It functions in the pathway carbohydrate degradation; glycolysis; pyruvate from D-glyceraldehyde 3-phosphate: step 2/5. This chain is Phosphoglycerate kinase, found in Deinococcus geothermalis (strain DSM 11300 / CIP 105573 / AG-3a).